Consider the following 147-residue polypeptide: Large ribosomal subunit protein uL15 (147 aa).

Residues 1 to 42 (MTIKLHHLRPAPGSKSNKIRVGRGEGGKRGKTAGRGTKGTKA) are disordered.

It belongs to the universal ribosomal protein uL15 family. In terms of assembly, part of the 50S ribosomal subunit.

In terms of biological role, binds to the 23S rRNA. In Rhodococcus erythropolis (strain PR4 / NBRC 100887), this protein is Large ribosomal subunit protein uL15.